We begin with the raw amino-acid sequence, 458 residues long: Probable alpha-L-glutamate ligase (458 aa).

Residues 1–162 (MSDNKFIIGS…YGVKSAKKSG (162 aa)) are unknown. The segment at 163-458 (LKIGLLASNP…IEKKLGWKAE (296 aa)) is alpha-L-glutamate ligase. The ATP-grasp domain maps to 267–450 (LQLLQKNNLD…IAGAMIDSIE (184 aa)). Residues lysine 304, 341–342 (EF), aspartate 350, and 374–376 (RAN) each bind ATP. Mg(2+) is bound by residues aspartate 411, glutamate 423, and asparagine 425. Mn(2+) is bound by residues aspartate 411, glutamate 423, and asparagine 425.

In the C-terminal section; belongs to the RimK family. Mg(2+) is required as a cofactor. The cofactor is Mn(2+).

In Shewanella halifaxensis (strain HAW-EB4), this protein is Probable alpha-L-glutamate ligase.